We begin with the raw amino-acid sequence, 532 residues long: Phosphoenolpyruvate carboxykinase (ATP) (532 aa).

3 residues coordinate substrate: arginine 60, tyrosine 194, and lysine 200. Residues lysine 200, histidine 219, and 237-245 contribute to the ATP site; that span reads GLSGTGKTT. Mn(2+) is bound by residues lysine 200 and histidine 219. Mn(2+) is bound at residue aspartate 258. ATP contacts are provided by glutamate 286, arginine 324, and threonine 449. Arginine 324 lines the substrate pocket.

Belongs to the phosphoenolpyruvate carboxykinase (ATP) family. Mn(2+) serves as cofactor.

It localises to the cytoplasm. It carries out the reaction oxaloacetate + ATP = phosphoenolpyruvate + ADP + CO2. It participates in carbohydrate biosynthesis; gluconeogenesis. In terms of biological role, involved in the gluconeogenesis. Catalyzes the conversion of oxaloacetate (OAA) to phosphoenolpyruvate (PEP) through direct phosphoryl transfer between the nucleoside triphosphate and OAA. This chain is Phosphoenolpyruvate carboxykinase (ATP), found in Paracoccus denitrificans (strain Pd 1222).